The chain runs to 117 residues: Large ribosomal subunit protein eL8 (117 aa).

It belongs to the eukaryotic ribosomal protein eL8 family. In terms of assembly, part of the 50S ribosomal subunit. Probably part of the RNase P complex.

It is found in the cytoplasm. Its function is as follows. Multifunctional RNA-binding protein that recognizes the K-turn motif in ribosomal RNA, the RNA component of RNase P, box H/ACA, box C/D and box C'/D' sRNAs. The sequence is that of Large ribosomal subunit protein eL8 from Methanococcus aeolicus (strain ATCC BAA-1280 / DSM 17508 / OCM 812 / Nankai-3).